The chain runs to 708 residues: Ubiquitin thioesterase ZRANB1 (708 aa).

The segment at 3-33 adopts a RanBP2-type 1 zinc-finger fold; sequence ERGIKWACEYCTYENWPSAIKCTMCRAQRPS. Zn(2+) contacts are provided by Cys-10, Cys-13, Cys-24, and Cys-27. The tract at residues 38-73 is disordered; sequence TEDPFKSGSSDVGRDWDPSSTEGGSSPLICPDSSAR. 2 RanBP2-type zinc fingers span residues 84–113 and 149–178; these read NANK…QRRT and RTQH…PRPN. Residues Cys-90, Cys-93, Cys-104, Cys-107, Cys-155, Cys-158, Cys-169, and Cys-172 each coordinate Zn(2+). Residues 200-225 form a disordered region; it reads RARWRGSCSSGNSQRRSPPATKRDSE. Residues 206 to 215 show a composition bias toward polar residues; the sequence is SCSSGNSQRR. ANK repeat units follow at residues 260–290 and 313–340; these read KKTD…SGGD and YTLV…QQAA. The tract at residues 392–641 is TRAF-binding; that stretch reads PTVQEKLFDE…LSAQELGNEE (250 aa). The OTU domain maps to 432–592; the sequence is LYALWNRTAG…RGHFSALVAM (161 aa). Cys-443 functions as the Nucleophile in the catalytic mechanism. His-585 functions as the Proton acceptor in the catalytic mechanism.

Belongs to the peptidase C64 family. As to quaternary structure, interacts with TRAF6. Interacts with APC. As to expression, widely expressed.

It localises to the cytoplasm. It is found in the nucleus. The catalysed reaction is Thiol-dependent hydrolysis of ester, thioester, amide, peptide and isopeptide bonds formed by the C-terminal Gly of ubiquitin (a 76-residue protein attached to proteins as an intracellular targeting signal).. Its function is as follows. Ubiquitin thioesterase, which specifically hydrolyzes 'Lys-29'-linked and 'Lys-33'-linked diubiquitin. Also cleaves 'Lys-63'-linked chains, but with 40-fold less efficiency compared to 'Lys-29'-linked ones. Positive regulator of the Wnt signaling pathway that deubiquitinates APC protein, a negative regulator of Wnt-mediated transcription. Acts as a regulator of autophagy by mediating deubiquitination of PIK3C3/VPS34, thereby promoting autophagosome maturation. Plays a role in the regulation of cell morphology and cytoskeletal organization. Required in the stress fiber dynamics and cell migration. The chain is Ubiquitin thioesterase ZRANB1 from Homo sapiens (Human).